A 478-amino-acid chain; its full sequence is 7-dehydrocholesterol reductase (478 aa).

The disordered stretch occupies residues 1-28; sequence MMASDRVRKRHKGSANGAQTVEKEPSKE. 6 consecutive transmembrane segments (helical) span residues 43-63, 97-117, 180-200, 269-289, 309-329, and 333-353; these read LSGV…FIMA, WAAA…YMCV, WIPL…FAFI, VTNS…DFFW, LGWG…LYLV, and IQLS…GYYI. NADP(+) contacts are provided by residues lysine 361, arginine 365, methionine 398, tryptophan 403, and 410-411; that span reads NY. Residues 424 to 444 traverse the membrane as a helical segment; that stretch reads ACGGNHLLPYFYIIYMTILLV. NADP(+)-binding positions include aspartate 450, 454–458, and tyrosine 465; that span reads CSNKY.

This sequence belongs to the ERG4/ERG24 family.

The protein localises to the endoplasmic reticulum membrane. It carries out the reaction cholesterol + NADP(+) = 7-dehydrocholesterol + NADPH + H(+). The catalysed reaction is 7-dehydrodesmosterol + NADPH + H(+) = desmosterol + NADP(+). It participates in steroid biosynthesis; cholesterol biosynthesis. Its function is as follows. Catalyzes the last step of the cholesterol synthesis pathway, which transforms cholesta-5,7-dien-3beta-ol (7-dehydrocholesterol,7-DHC) into cholesterol by reducing the C7-C8 double bond of its sterol core. Can also metabolize cholesta-5,7,24-trien-3beta-ol (7-dehydrodemosterol, 7-DHD) to desmosterol, which is then metabolized by the Delta(24)-sterol reductase (DHCR24) to cholesterol. Modulates ferroptosis (a form of regulated cell death driven by iron-dependent lipid peroxidation) through the metabolic breakdown of the anti-ferroptotic metabolites 7-DHC and 7-DHD which, when accumulated, divert the propagation of peroxyl radical-mediated damage from phospholipid components to its sterol core, protecting plasma and mitochondrial membranes from phospholipid autoxidation. This is 7-dehydrocholesterol reductase (dhcr7) from Danio rerio (Zebrafish).